Consider the following 111-residue polypeptide: Small ribosomal subunit protein bS6 (111 aa).

Belongs to the bacterial ribosomal protein bS6 family.

Functionally, binds together with bS18 to 16S ribosomal RNA. The sequence is that of Small ribosomal subunit protein bS6 from Francisella tularensis subsp. tularensis (strain FSC 198).